The following is a 91-amino-acid chain: MTRSLKKGPFVDHHLLAKAEKAVATKDKKPVKTWSRRSMVLPEFIGLTIAVHNGKQHVPVYVTDQMVGHKLGEFALTRTFKGHPADKKAKK.

The protein belongs to the universal ribosomal protein uS19 family.

Functionally, protein S19 forms a complex with S13 that binds strongly to the 16S ribosomal RNA. This chain is Small ribosomal subunit protein uS19, found in Delftia acidovorans (strain DSM 14801 / SPH-1).